Reading from the N-terminus, the 155-residue chain is Protein-export protein SecB (155 aa).

This sequence belongs to the SecB family. In terms of assembly, homotetramer, a dimer of dimers. One homotetramer interacts with 1 SecA dimer.

Its subcellular location is the cytoplasm. In terms of biological role, one of the proteins required for the normal export of preproteins out of the cell cytoplasm. It is a molecular chaperone that binds to a subset of precursor proteins, maintaining them in a translocation-competent state. It also specifically binds to its receptor SecA. The sequence is that of Protein-export protein SecB from Klebsiella pneumoniae subsp. pneumoniae (strain ATCC 700721 / MGH 78578).